The following is a 165-amino-acid chain: Regulator of ribonuclease activity A (165 aa).

It belongs to the RraA family. Homotrimer. Binds to both RNA-binding sites in the C-terminal region of Rne and to RhlB.

The protein resides in the cytoplasm. In terms of biological role, globally modulates RNA abundance by binding to RNase E (Rne) and regulating its endonucleolytic activity. Can modulate Rne action in a substrate-dependent manner by altering the composition of the degradosome. Modulates RNA-binding and helicase activities of the degradosome. This is Regulator of ribonuclease activity A from Pseudoalteromonas translucida (strain TAC 125).